A 197-amino-acid chain; its full sequence is Chaperone protein dnaJ 20, chloroplastic (197 aa).

A chloroplast-targeting transit peptide spans 1-60; that stretch reads MKCYKSSSILSTNHHPFFYKQQPISSLQPTSIPTTISYPTRTRFSSTRIQSRLTHDDPVK. In terms of domain architecture, J spans 66-133; that stretch reads SFYDLLGVTE…RRRVLYDRDL (68 aa). A disordered region spans residues 169-197; sequence SGLRRRSNQKDNNTMSWAARMRRQQQESS.

It belongs to the DnaJ family. C/III subfamily. In terms of tissue distribution, light-grown seedlings.

The protein localises to the plastid. It localises to the chloroplast. Plays a continuous role in plant development probably in the structural organization of compartments. The polypeptide is Chaperone protein dnaJ 20, chloroplastic (ATJ20) (Arabidopsis thaliana (Mouse-ear cress)).